The primary structure comprises 246 residues: MRRIKLIVAYDGTHYAGYQVQPNGNTIQAEIESVLARMHRHPVKIIASGRTDARVHALGQVIHFDTTLEMPAERFVKALNAMLPDDILVKQAEEMDDTFHARYGAKRKEYRYHIRQTEDPFRRHYAATVTYKLSLEAMRQAMERLIGTHDFTSFSVTKAEVEDRVRTIYEAEVLEMGDEIIFRFVGSGFLYNQVRIMVGTVIEVGRGKYQPADITQMLEAKDRRVAGITAPPHGLYLWNVNYEKVD.

Aspartate 52 functions as the Nucleophile in the catalytic mechanism. A substrate-binding site is contributed by tyrosine 110.

Belongs to the tRNA pseudouridine synthase TruA family. Homodimer.

The catalysed reaction is uridine(38/39/40) in tRNA = pseudouridine(38/39/40) in tRNA. Its function is as follows. Formation of pseudouridine at positions 38, 39 and 40 in the anticodon stem and loop of transfer RNAs. The protein is tRNA pseudouridine synthase A of Exiguobacterium sp. (strain ATCC BAA-1283 / AT1b).